A 587-amino-acid chain; its full sequence is Putative inactive receptor-like protein kinase At1g64210 (587 aa).

Residues 1 to 19 (MQIFLFFFSLILCFVLISS) form the signal peptide. Residues 20 to 232 (QTLEDDKKAL…KTPFGLSQLA (213 aa)) lie on the Extracellular side of the membrane. N-linked (GlcNAc...) asparagine glycosylation is found at Asn-37 and Asn-44. LRR repeat units follow at residues 89 to 112 (SLKF…TNLK), 113 to 136 (SLTH…SELK), 137 to 160 (NLKV…SGLT), 161 to 183 (SLQV…HLPK), and 184 to 205 (LSQI…LQRF). Residues Asn-149, Asn-169, Asn-188, and Asn-214 are each glycosylated (N-linked (GlcNAc...) asparagine). A helical membrane pass occupies residues 233–253 (FLLILSAACVLCVSGLSFIMI). At 254-587 (TCFGKTRISG…IEDIRSVDAE (334 aa)) the chain is on the cytoplasmic side. The Protein kinase domain maps to 307 to 581 (SSSAEVLGKG…AQVLKLIEDI (275 aa)). A Phosphoserine modification is found at Ser-309. Residues 313-321 (LGKGAFGTT) and Lys-335 contribute to the ATP site. At Ser-386 the chain carries Phosphoserine. Phosphothreonine is present on residues Thr-462, Thr-463, Thr-466, and Thr-477.

The protein localises to the cell membrane. This chain is Putative inactive receptor-like protein kinase At1g64210, found in Arabidopsis thaliana (Mouse-ear cress).